A 246-amino-acid polypeptide reads, in one-letter code: Histone H1 (246 aa).

Disordered regions lie at residues Met1–Leu51 and Gly105–Lys246. Low complexity predominate over residues Pro9 to Ala34. The segment covering Lys35–Ser47 has biased composition (basic residues). The region spanning Thr49–Ser119 is the H15 domain. 2 stretches are compositionally biased toward basic residues: residues Ala129 to Pro189 and Pro198 to Ala208. Residues Lys224–Pro235 show a composition bias toward low complexity.

The protein belongs to the histone H1/H5 family.

It is found in the nucleus. It localises to the chromosome. Histones H1 are necessary for the condensation of nucleosome chains into higher-order structures. This is Histone H1 from Zea mays (Maize).